The following is a 123-amino-acid chain: Large ribosomal subunit protein bL19c (123 aa).

It belongs to the bacterial ribosomal protein bL19 family.

It localises to the plastid. The protein resides in the chloroplast. The polypeptide is Large ribosomal subunit protein bL19c (rpl19) (Porphyra purpurea (Red seaweed)).